Reading from the N-terminus, the 415-residue chain is Serine hydroxymethyltransferase (415 aa).

(6S)-5,6,7,8-tetrahydrofolate is bound by residues L117 and 121–123; that span reads GHL. At K225 the chain carries N6-(pyridoxal phosphate)lysine. (6S)-5,6,7,8-tetrahydrofolate-binding positions include E241 and 349 to 351; that span reads SPF.

The protein belongs to the SHMT family. As to quaternary structure, homodimer. Pyridoxal 5'-phosphate serves as cofactor.

It is found in the cytoplasm. It carries out the reaction (6R)-5,10-methylene-5,6,7,8-tetrahydrofolate + glycine + H2O = (6S)-5,6,7,8-tetrahydrofolate + L-serine. It participates in one-carbon metabolism; tetrahydrofolate interconversion. Its pathway is amino-acid biosynthesis; glycine biosynthesis; glycine from L-serine: step 1/1. Catalyzes the reversible interconversion of serine and glycine with tetrahydrofolate (THF) serving as the one-carbon carrier. This reaction serves as the major source of one-carbon groups required for the biosynthesis of purines, thymidylate, methionine, and other important biomolecules. Also exhibits THF-independent aldolase activity toward beta-hydroxyamino acids, producing glycine and aldehydes, via a retro-aldol mechanism. This is Serine hydroxymethyltransferase from Campylobacter hominis (strain ATCC BAA-381 / DSM 21671 / CCUG 45161 / LMG 19568 / NCTC 13146 / CH001A).